We begin with the raw amino-acid sequence, 291 residues long: Pyridoxal 5'-phosphate synthase subunit PdxS (291 aa).

Asp-23 serves as a coordination point for D-ribose 5-phosphate. Lys-80 acts as the Schiff-base intermediate with D-ribose 5-phosphate in catalysis. A D-ribose 5-phosphate-binding site is contributed by Gly-152. A D-glyceraldehyde 3-phosphate-binding site is contributed by Arg-164. D-ribose 5-phosphate contacts are provided by residues Gly-213 and 234-235; that span reads GS.

This sequence belongs to the PdxS/SNZ family. In terms of assembly, in the presence of PdxT, forms a dodecamer of heterodimers.

It carries out the reaction aldehydo-D-ribose 5-phosphate + D-glyceraldehyde 3-phosphate + L-glutamine = pyridoxal 5'-phosphate + L-glutamate + phosphate + 3 H2O + H(+). It functions in the pathway cofactor biosynthesis; pyridoxal 5'-phosphate biosynthesis. Catalyzes the formation of pyridoxal 5'-phosphate from ribose 5-phosphate (RBP), glyceraldehyde 3-phosphate (G3P) and ammonia. The ammonia is provided by the PdxT subunit. Can also use ribulose 5-phosphate and dihydroxyacetone phosphate as substrates, resulting from enzyme-catalyzed isomerization of RBP and G3P, respectively. This chain is Pyridoxal 5'-phosphate synthase subunit PdxS, found in Haemophilus influenzae (strain PittGG).